The chain runs to 361 residues: MRKWICCTCQIEDSNEEQQLKSSQQQSDANHKNSKPAPVAKHEVKKEALPIEVPPLSLDEVKEKTENFGSKALIGEGSYGRVYYATLNDGVAVALKKLDVAPEAETDTEFLSQVSMVSRLKHENLIQLLGFCVDGNLRVLAYEFATMGSLHDILHGRKGVQGAQPGPTLDWITRVKIAVEAARGLEYLHEKSQPPVIHRDIRSSNVLLFEDYKAKIADFNLSNQAPDNAARLHSTRVLGTFGYHAPEYAMTGQLTQKSDVYSFGVVLLELLTGRKPVDHTMPRGQQSLVTWATPRLSEDKVKQCIDPKLKADYPPKAVAKLAAVAALCVQYEAEFRPNMSIVVKALQPLLKPPAAAPAPES.

Residues 16–43 (EEQQLKSSQQQSDANHKNSKPAPVAKHE) are disordered. The Protein kinase domain maps to 68 to 350 (FGSKALIGEG…IVVKALQPLL (283 aa)). ATP is bound by residues 74-82 (IGEGSYGRV) and K96. The active-site Proton acceptor is the D200.

This sequence belongs to the protein kinase superfamily. Tyr protein kinase family. In terms of assembly, interacts with OXI1. Autophosphorylated and phosphorylated by OXI1.

The protein resides in the cell membrane. It carries out the reaction L-tyrosyl-[protein] + ATP = O-phospho-L-tyrosyl-[protein] + ADP + H(+). This chain is PTI1-like tyrosine-protein kinase 1 (PTI11), found in Arabidopsis thaliana (Mouse-ear cress).